The primary structure comprises 221 residues: Thiopurine S-methyltransferase (221 aa).

S-adenosyl-L-methionine is bound by residues Trp-12, Leu-47, Glu-68, and Arg-125.

Belongs to the class I-like SAM-binding methyltransferase superfamily. TPMT family.

The protein resides in the cytoplasm. It catalyses the reaction S-adenosyl-L-methionine + a thiopurine = S-adenosyl-L-homocysteine + a thiopurine S-methylether.. This Legionella pneumophila subsp. pneumophila (strain Philadelphia 1 / ATCC 33152 / DSM 7513) protein is Thiopurine S-methyltransferase.